We begin with the raw amino-acid sequence, 159 residues long: Peptide methionine sulfoxide reductase MsrB (159 aa).

Positions 22-144 (RERLEANLTA…NSVSLQFVKA (123 aa)) constitute a MsrB domain. Cysteine 61, cysteine 64, cysteine 110, and cysteine 113 together coordinate Zn(2+). Cysteine 133 serves as the catalytic Nucleophile.

The protein belongs to the MsrB Met sulfoxide reductase family. Zn(2+) serves as cofactor.

The catalysed reaction is L-methionyl-[protein] + [thioredoxin]-disulfide + H2O = L-methionyl-(R)-S-oxide-[protein] + [thioredoxin]-dithiol. The chain is Peptide methionine sulfoxide reductase MsrB from Caulobacter vibrioides (strain ATCC 19089 / CIP 103742 / CB 15) (Caulobacter crescentus).